Reading from the N-terminus, the 178-residue chain is Large ribosomal subunit protein uL10 (178 aa).

This sequence belongs to the universal ribosomal protein uL10 family. As to quaternary structure, part of the ribosomal stalk of the 50S ribosomal subunit. The N-terminus interacts with L11 and the large rRNA to form the base of the stalk. The C-terminus forms an elongated spine to which L12 dimers bind in a sequential fashion forming a multimeric L10(L12)X complex.

In terms of biological role, forms part of the ribosomal stalk, playing a central role in the interaction of the ribosome with GTP-bound translation factors. The sequence is that of Large ribosomal subunit protein uL10 from Thermosynechococcus vestitus (strain NIES-2133 / IAM M-273 / BP-1).